The following is a 313-amino-acid chain: Porphobilinogen deaminase (313 aa).

Position 242 is an S-(dipyrrolylmethanemethyl)cysteine (cysteine 242).

The protein belongs to the HMBS family. Monomer. Dipyrromethane serves as cofactor.

It catalyses the reaction 4 porphobilinogen + H2O = hydroxymethylbilane + 4 NH4(+). It functions in the pathway porphyrin-containing compound metabolism; protoporphyrin-IX biosynthesis; coproporphyrinogen-III from 5-aminolevulinate: step 2/4. Tetrapolymerization of the monopyrrole PBG into the hydroxymethylbilane pre-uroporphyrinogen in several discrete steps. The chain is Porphobilinogen deaminase from Enterobacter sp. (strain 638).